The chain runs to 328 residues: C-type lectin domain family 4 member K (328 aa).

Over 1–43 the chain is Cytoplasmic; that stretch reads MTVEKEAPDAHFTVDKQNISLWPREPPPKSGPSLVPGKTPTVR. The helical; Signal-anchor for type II membrane protein transmembrane segment at 44-64 threads the bilayer; that stretch reads AALICLTLVLVASVLLQAVLY. Topologically, residues 65 to 328 are extracellular; it reads PRFMGTISDV…CKRPYVPSEP (264 aa). N-linked (GlcNAc...) asparagine glycosylation is found at Asn87, Asn113, and Asn180. A coiled-coil region spans residues 145–190; it reads EEVSTLNAQIPELKSDLEKASALNTKIRALQGSLENMSKLLKRQND. Positions 202 to 320 constitute a C-type lectin domain; it reads FKGNFYYFSL…CDKTFLFICK (119 aa). Cystine bridges form between Cys223/Cys319 and Cys295/Cys311.

In terms of assembly, homotrimer. In terms of tissue distribution, exclusively expressed by Langerhans cells. Expressed in astrocytoma and malignant ependymoma, but not in normal brain tissues.

The protein localises to the membrane. Its function is as follows. Calcium-dependent lectin displaying mannose-binding specificity. Induces the formation of Birbeck granules (BGs); is a potent regulator of membrane superimposition and zippering. Binds to sulfated as well as mannosylated glycans, keratan sulfate (KS) and beta-glucans. Facilitates uptake of antigens and is involved in the routing and/or processing of antigen for presentation to T cells. Major receptor on primary Langerhans cells for Candida species, Saccharomyces species, and Malassezia furfur. Protects against human immunodeficiency virus-1 (HIV-1) infection. Binds to high-mannose structures present on the envelope glycoprotein which is followed by subsequent targeting of the virus to the Birbeck granules leading to its rapid degradation. The chain is C-type lectin domain family 4 member K (CD207) from Homo sapiens (Human).